The chain runs to 941 residues: DNA mismatch repair protein MutS (941 aa).

613–620 (GPNMAGKS) contacts ATP.

This sequence belongs to the DNA mismatch repair MutS family.

This protein is involved in the repair of mismatches in DNA. It is possible that it carries out the mismatch recognition step. This protein has a weak ATPase activity. The polypeptide is DNA mismatch repair protein MutS (Clostridium botulinum (strain Alaska E43 / Type E3)).